Consider the following 275-residue polypeptide: Large ribosomal subunit protein uL2c (275 aa).

Positions 225–252 (MNPCDHPHGGGEGRSPIGRAKPVTPWGK) are disordered.

Belongs to the universal ribosomal protein uL2 family. As to quaternary structure, part of the 50S ribosomal subunit.

It is found in the plastid. Its subcellular location is the chloroplast. In Guillardia theta (Cryptophyte), this protein is Large ribosomal subunit protein uL2c (rpl2).